The chain runs to 552 residues: Olefin beta-lactone synthetase (552 aa).

ATP-binding positions include 182 to 190 (TSGSTGVPK), 316 to 321 (TPYGAT), Asp425, and Arg440.

Belongs to the ATP-dependent AMP-binding enzyme family. As to quaternary structure, monomer.

It catalyses the reaction a (2R,3S)-2-alkyl-3-hydroxyalkanoate + ATP = a cis-3-alkyl-4-alkyloxetan-2-one + AMP + diphosphate. Involved in olefin biosynthesis. Catalyzes the conversion of beta-hydroxy acid substrates to beta-lactones in the presence of ATP. Can use all four stereoisomers of 2-hexyl-3-hydroxydecanoic acid. The protein is Olefin beta-lactone synthetase of Stenotrophomonas maltophilia (strain K279a).